Here is a 775-residue protein sequence, read N- to C-terminus: Ribonucleoside-diphosphate reductase large subunit (775 aa).

Residues Thr200, 215–216 (SC), Gly246, 427–431 (NLCTE), and 606–610 (PTVSS) contribute to the substrate site. Cys216 and Cys444 are disulfide-bonded. Asn427 (proton acceptor) is an active-site residue. Cys429 (cysteine radical intermediate) is an active-site residue. The Proton acceptor role is filled by Glu431.

It belongs to the ribonucleoside diphosphate reductase large chain family. As to quaternary structure, heterotetramer composed of a homodimer of the large subunit (R1) and a homodimer of the small subunit (R2). Larger multisubunit protein complex are also active, composed of (R1)n(R2)n.

It carries out the reaction a 2'-deoxyribonucleoside 5'-diphosphate + [thioredoxin]-disulfide + H2O = a ribonucleoside 5'-diphosphate + [thioredoxin]-dithiol. Functionally, ribonucleoside-diphosphate reductase holoenzyme provides the precursors necessary for viral DNA synthesis. Allows virus growth in non-dividing cells, as well as reactivation from latency in infected hosts. Catalyzes the biosynthesis of deoxyribonucleotides from the corresponding ribonucleotides. This chain is Ribonucleoside-diphosphate reductase large subunit, found in Homo sapiens (Human).